The chain runs to 532 residues: IQ domain-containing protein IQM4 (532 aa).

Disordered regions lie at residues 47-67 and 85-104; these read SRTN…TGME and PMNK…RNSL. Residues 56-66 show a composition bias toward basic and acidic residues; sequence NPQEKSPKTGM. Residues 85-94 are compositionally biased toward acidic residues; the sequence is PMNKEDEEIV. The IQ domain occupies 136-165; it reads LDAAATTLQKVYKSYRTRRNLADCAVVVEE. Disordered regions lie at residues 410-443 and 487-513; these read SSGY…KERE and PRIS…PRVR. Positions 487–496 are enriched in polar residues; it reads PRISPGSTRF. Residues 499 to 509 are compositionally biased toward pro residues; that stretch reads PYGPIPSPRPS.

In terms of tissue distribution, expressed in roots, cauline leaves and flowers, and at lower levels in rosette leaves, stems and siliques.

The protein localises to the cytoplasm. Its subcellular location is the nucleus. Its function is as follows. May be involved in biotic and abiotic stress responses. The polypeptide is IQ domain-containing protein IQM4 (Arabidopsis thaliana (Mouse-ear cress)).